The chain runs to 666 residues: Pantothenate kinase 1 (666 aa).

Belongs to the type II pantothenate kinase family.

It catalyses the reaction (R)-pantothenate + ATP = (R)-4'-phosphopantothenate + ADP + H(+). It functions in the pathway cofactor biosynthesis; coenzyme A biosynthesis; CoA from (R)-pantothenate: step 1/5. Regulated by feedback inhibition by malonyl-CoA. Its function is as follows. Catalyzes the phosphorylation of pantothenate the first step in CoA biosynthesis. May play a role in the physiological regulation of the intracellular CoA concentration. This Oryza sativa subsp. japonica (Rice) protein is Pantothenate kinase 1.